The primary structure comprises 486 residues: Cardiolipin synthase A (486 aa).

2 helical membrane passes run 3 to 23 (TFYT…IAGV) and 38 to 58 (MAWL…YLSF). PLD phosphodiesterase domains follow at residues 219-246 (MDLR…VDPR) and 399-426 (EGGL…DMRS). Catalysis depends on residues histidine 224, lysine 226, aspartate 231, histidine 404, lysine 406, and aspartate 411.

The protein belongs to the phospholipase D family. Cardiolipin synthase subfamily. ClsA sub-subfamily.

Its subcellular location is the cell inner membrane. The catalysed reaction is 2 a 1,2-diacyl-sn-glycero-3-phospho-(1'-sn-glycerol) = a cardiolipin + glycerol. Its function is as follows. Catalyzes the reversible phosphatidyl group transfer from one phosphatidylglycerol molecule to another to form cardiolipin (CL) (diphosphatidylglycerol) and glycerol. This Klebsiella pneumoniae subsp. pneumoniae (strain ATCC 700721 / MGH 78578) protein is Cardiolipin synthase A.